The following is a 452-amino-acid chain: Probable ECA polymerase (452 aa).

The next 11 membrane-spanning stretches (helical) occupy residues 6 to 26 (FSGLLVVWLLSTLFIATLTWF), 37 to 57 (VFFSLLFLLTFFFGFPLTSVL), 63 to 83 (VGVAPPEILLQALLSAACFYG), 118 to 138 (VILMGIALVSVAIFFMHNGFL), 155 to 175 (GVALKRFFYFFIPAMLVVYFL), 181 to 201 (AWLFFLVSTVAFGLLTYMIVG), 207 to 227 (IIIAFAIFLFIGIIRGWISLW), 228 to 248 (MLAAAGVLGIVGMFWLALKRY), 341 to 361 (LVVMGGALFIPLGAIVVGLII), 378 to 398 (YKAAILHSFCFGAIFNMIVLA), and 410 to 430 (VFFLVVFGASLLVAKLLFWLF).

The protein belongs to the WzyE family. In terms of assembly, probably part of a complex composed of WzxE, WzyE and WzzE.

The protein localises to the cell inner membrane. Its pathway is bacterial outer membrane biogenesis; enterobacterial common antigen biosynthesis. Its function is as follows. Probably involved in the polymerization of enterobacterial common antigen (ECA) trisaccharide repeat units. The polypeptide is Probable ECA polymerase (Salmonella typhi).